A 542-amino-acid polypeptide reads, in one-letter code: Phosphoacetylglucosamine mutase (542 aa).

Met-1 is subject to N-acetylmethionine. A Phosphothreonine modification is found at Thr-62. The active-site Phosphoserine intermediate is the Ser-64. Ser-64, Asp-276, Asp-278, and Asp-280 together coordinate Mg(2+). Ser-64 is modified (phosphoserine). Substrate is bound by residues 370-372 (EAN), 496-500 (RPSGT), and Arg-505.

It belongs to the phosphohexose mutase family. Requires Mg(2+) as cofactor.

It carries out the reaction N-acetyl-alpha-D-glucosamine 1-phosphate = N-acetyl-D-glucosamine 6-phosphate. Its pathway is nucleotide-sugar biosynthesis; UDP-N-acetyl-alpha-D-glucosamine biosynthesis; N-acetyl-alpha-D-glucosamine 1-phosphate from alpha-D-glucosamine 6-phosphate (route I): step 2/2. Its function is as follows. Catalyzes the conversion of GlcNAc-6-P into GlcNAc-1-P during the synthesis of uridine diphosphate/UDP-GlcNAc, a sugar nucleotide critical to multiple glycosylation pathways including protein N- and O-glycosylation. The polypeptide is Phosphoacetylglucosamine mutase (Mus musculus (Mouse)).